Consider the following 363-residue polypeptide: Ribonuclease P protein subunit p40 (363 aa).

In terms of assembly, component of nuclear RNase P and RNase MRP ribonucleoproteins. RNase P consists of a catalytic RNA moiety and about 10 protein subunits; POP1, POP4, POP5, POP7, RPP14, RPP21, RPP25, RPP30, RPP38 and RPP40. Within the RNase P complex, POP1, POP7 and RPP25 form the 'finger' subcomplex, POP5, RPP14, RPP40 and homodimeric RPP30 form the 'palm' subcomplex, and RPP21, POP4 and RPP38 form the 'wrist' subcomplex. All subunits of the RNase P complex interact with the catalytic RNA. Several subunits of RNase P are also part of the RNase MRP complex. RNase MRP consists of a catalytic RNA moiety and about 8 protein subunits; POP1, POP7, RPP25, RPP30, RPP38, RPP40 and possibly also POP4 and POP5.

The protein resides in the nucleus. It is found in the nucleolus. Its function is as follows. Component of ribonuclease P, a ribonucleoprotein complex that generates mature tRNA molecules by cleaving their 5'-ends. Also a component of the MRP ribonuclease complex, which cleaves pre-rRNA sequences. The protein is Ribonuclease P protein subunit p40 (Rpp40) of Mus musculus (Mouse).